Reading from the N-terminus, the 445-residue chain is Xylose isomerase (445 aa).

Residues H107 and D110 contribute to the active site. Positions 238, 274, 277, 302, 313, 315, and 345 each coordinate Mg(2+).

This sequence belongs to the xylose isomerase family. As to quaternary structure, homotetramer. Requires Mg(2+) as cofactor.

The protein resides in the cytoplasm. It catalyses the reaction alpha-D-xylose = alpha-D-xylulofuranose. The polypeptide is Xylose isomerase (Bacillus pumilus (strain SAFR-032)).